Reading from the N-terminus, the 943-residue chain is MTDYKATLNLPDTAFPMKAGLPQREPQILQRWDSIGLYQKLREIGKDRPKFVLHDGPPYANGKIHIGHALNKILKDMIVRSKTLAGFDAPYVPGWDCHGLPIEHKVEVTHGKHLSADRTRELCREYAAEQIEGQKTEFIRLGVLGDWDNPYKTMNFANEAGEIRALAEMVKQGFVFKGLKPVNWCFDCGSALAEAEVEYADKKSQTIDVAFPVADEAKLAAAFGLASLAKPAAIVIWTTTPWTIPANQALNIHPEFKYALVDTGERLLVLAEELVESCLKRYNLEGSVVASAQGSALELINFRHPFYDRLSPIYLADYVELGAGTGVVHSSPAYGEDDFVTCKRYGMVNDDILTPVQSNGVYVDSLPFFGGQFIWKANPAIVEKLSEVGALMHTETISHSYMHCWRHKTPLIYRATAQWFVGMDKQPSTGEPLRERALKAIEDTKFVPAWGQARLHAMIANRPDWCISRQRNWGVPIPFFLHKQTGDLHPRTVELMEEVAKRVEQQGIEAWFKLDAAELLGAEADQYDKIADTLDVWFDSGTTHWHVLRGSHDIGHATGPRADLYLEGSDQHRGWFHSSLLTGCAIDNHAPYRELLTHGFTVDENGRKMSKSLGNTIEPEKVNNTLGADILRLWVSATDYSGEMAVSEQILQRSADAYRRIRNTARFLLSNLSGFDPARDLLAPEDMLALDRWAVDRTLLLQRELEEHYSEYRFWNVYSKVHNFCVQELGGFYLDIIKDRQYTTGANSVARRSCQTALYHISEALVRWIAPILAFTADEIWQYLPGERNESVMLNGWYQGLSELPEGTELDRAYWDRVMAVKASVNKELENQRTAKVIGGNLQAEVTLYADEGLSADLGKLGDELRFVLITSAASVVPFAQAPAEAVATEVEGLKLQVVKSGHTKCGRCWHFRADVGSHPEHPEICGRCVDNLTGSGEVRHYA.

The short motif at 58–68 (PYANGKIHIGH) is the 'HIGH' region element. L-isoleucyl-5'-AMP is bound at residue Glu567. Positions 608–612 (KMSKS) match the 'KMSKS' region motif. Lys611 serves as a coordination point for ATP. Zn(2+) is bound by residues Cys906, Cys909, Cys926, and Cys929.

Belongs to the class-I aminoacyl-tRNA synthetase family. IleS type 1 subfamily. Monomer. Zn(2+) serves as cofactor.

It localises to the cytoplasm. It catalyses the reaction tRNA(Ile) + L-isoleucine + ATP = L-isoleucyl-tRNA(Ile) + AMP + diphosphate. Its function is as follows. Catalyzes the attachment of isoleucine to tRNA(Ile). As IleRS can inadvertently accommodate and process structurally similar amino acids such as valine, to avoid such errors it has two additional distinct tRNA(Ile)-dependent editing activities. One activity is designated as 'pretransfer' editing and involves the hydrolysis of activated Val-AMP. The other activity is designated 'posttransfer' editing and involves deacylation of mischarged Val-tRNA(Ile). The polypeptide is Isoleucine--tRNA ligase (Pseudomonas putida (strain ATCC 47054 / DSM 6125 / CFBP 8728 / NCIMB 11950 / KT2440)).